We begin with the raw amino-acid sequence, 191 residues long: Calcium-activated potassium channel subunit beta-1 (191 aa).

The Cytoplasmic segment spans residues 1–18 (MGKKLVMAQKRGETRALC). Residues 19 to 39 (LGVAMVVCAAITYYVLGTTVL) form a helical membrane-spanning segment. Residues 40-155 (PLYQKSVWTQ…VVYQRLYGPQ (116 aa)) are Extracellular-facing. Asn-80 and Asn-142 each carry an N-linked (GlcNAc...) asparagine glycan. Residues 156 to 176 (VLLFSFFWPTFLLTGGLLLIA) form a helical membrane-spanning segment. Residues 177–191 (MVKLNRSLSILAAQK) are Cytoplasmic-facing.

Belongs to the KCNMB (TC 8.A.14.1) family. KCNMB1 subfamily. In terms of assembly, interacts with KCNMA1 tetramer. There are probably 4 molecules of KCMNB1 per KCNMA1 tetramer. In terms of processing, N-glycosylated. As to expression, expressed in many tissues containing smooth muscles. In brain and heart, it is not expressed except in the vasculature, such as cerebral arteries, aorta and corona arteries.

The protein resides in the membrane. In terms of biological role, regulatory subunit of the calcium activated potassium KCNMA1 (maxiK) channel. Modulates the calcium sensitivity and gating kinetics of KCNMA1, thereby contributing to KCNMA1 channel diversity. Increases the apparent Ca(2+)/voltage sensitivity of the KCNMA1 channel. It also modifies KCNMA1 channel kinetics and alters its pharmacological properties. It slows down the activation and the deactivation kinetics of the channel. Acts as a negative regulator of smooth muscle contraction by enhancing the calcium sensitivity to KCNMA1. Its presence is also a requirement for internal binding of the KCNMA1 channel opener dehydrosoyasaponin I (DHS-1) triterpene glycoside and for external binding of the agonist hormone 17-beta-estradiol (E2). Increases the binding activity of charybdotoxin (CTX) toxin to KCNMA1 peptide blocker by increasing the CTX association rate and decreasing the dissociation rate. The polypeptide is Calcium-activated potassium channel subunit beta-1 (Kcnmb1) (Mus musculus (Mouse)).